Reading from the N-terminus, the 212-residue chain is Transcription factor MYB8 (212 aa).

HTH myb-type domains lie at Lys-9–Leu-61 and Arg-62–Leu-116. 2 consecutive DNA-binding regions (H-T-H motif) follow at residues Trp-37–Leu-61 and Trp-89–Ile-112.

It is found in the nucleus. Its function is as follows. Transcription activator. In Arabidopsis thaliana (Mouse-ear cress), this protein is Transcription factor MYB8.